The following is a 134-amino-acid chain: MVSRGFGREKRLLTPRQFKAVFDSPSGKAPGKSVLLLARDNQLDHPRLGLVIGKKSVKLAVERNRIKRQIRESFRLNQDNLVGWDIVVVARKGLGDLENGELAQQFGKLWKRLARSRPSRDADVSPGTSDNPHA.

It belongs to the RnpA family. In terms of assembly, consists of a catalytic RNA component (M1 or rnpB) and a protein subunit.

It carries out the reaction Endonucleolytic cleavage of RNA, removing 5'-extranucleotides from tRNA precursor.. In terms of biological role, RNaseP catalyzes the removal of the 5'-leader sequence from pre-tRNA to produce the mature 5'-terminus. It can also cleave other RNA substrates such as 4.5S RNA. The protein component plays an auxiliary but essential role in vivo by binding to the 5'-leader sequence and broadening the substrate specificity of the ribozyme. This chain is Ribonuclease P protein component, found in Ectopseudomonas mendocina (strain ymp) (Pseudomonas mendocina).